Here is a 704-residue protein sequence, read N- to C-terminus: Protein NPG1 (704 aa).

TPR repeat units lie at residues 24–57, 58–90, 177–210, 309–342, 430–463, 555–588, 589–622, and 662–695; these read NGICMKTTEVEAKLDEGNIQEAESSLREGLSLNF, EEARALLGRLEYQRGNLEGALRVFEGIDLQAAI, SHAVELLPALWKESGDYQEAISAYRRALLSQWNL, IERWNTLALSYSAAGQNSAAVNLLRKSLHKHEQP, PDLIFELGVQYAEQRNLKAASRYAKEFIDATGGS, FEVWHGLAYLYSSLSHWNDVEVCLKKAGELKQYS, ASMLHTEGRMWEGRKEFKPALAAFLDGLLLDGSS, and RKAWYYLGMVHKSDGRIADATDCFQAASMLEESD.

In terms of assembly, interacts with calmodulin in a calcium-dependent manner. Expressed only in pollen and in pollen tubes.

In terms of biological role, calmodulin-binding protein essential for pollen germination, but not necessary for microsporogenesis or gametogenesis. The chain is Protein NPG1 from Arabidopsis thaliana (Mouse-ear cress).